The sequence spans 1025 residues: Beta-galactosidase (1025 aa).

Residues N105 and D204 each coordinate substrate. A Na(+)-binding site is contributed by D204. Mg(2+)-binding residues include E417, H419, and E462. Substrate contacts are provided by residues E462 and E538–H541. Residue E462 is the Proton donor of the active site. Residue E538 is the Nucleophile of the active site. N598 is a binding site for Mg(2+). Na(+)-binding residues include F602 and N605. Residues N605 and W1003 each contribute to the substrate site.

It belongs to the glycosyl hydrolase 2 family. Homotetramer. It depends on Mg(2+) as a cofactor. Requires Na(+) as cofactor.

It catalyses the reaction Hydrolysis of terminal non-reducing beta-D-galactose residues in beta-D-galactosides.. The sequence is that of Beta-galactosidase from Aeromonas hydrophila subsp. hydrophila (strain ATCC 7966 / DSM 30187 / BCRC 13018 / CCUG 14551 / JCM 1027 / KCTC 2358 / NCIMB 9240 / NCTC 8049).